Here is a 143-residue protein sequence, read N- to C-terminus: Large ribosomal subunit protein uL15 (143 aa).

The tract at residues 1–52 (MELNSIQPADGAKHYKRRVGRGIGSGLGKTSGRGHKGQKSRSGGFHKVGFEG) is disordered. Gly residues predominate over residues 21-31 (RGIGSGLGKTS).

This sequence belongs to the universal ribosomal protein uL15 family. As to quaternary structure, part of the 50S ribosomal subunit.

Its function is as follows. Binds to the 23S rRNA. In Janthinobacterium sp. (strain Marseille) (Minibacterium massiliensis), this protein is Large ribosomal subunit protein uL15.